Reading from the N-terminus, the 347-residue chain is Extracellular exo-alpha-(1-&gt;5)-L-arabinofuranosidase ArbA (347 aa).

The N-terminal stretch at 1–31 (MPTHHPITRQHWHHSWLSALALLCASLACGA) is a signal peptide. Substrate is bound at residue Asp-35. Asp-38 functions as the Proton acceptor in the catalytic mechanism. Substrate contacts are provided by residues 90–92 (DGH), 115–116 (GK), Asn-155, Ser-175, and Glu-221. Glu-221 functions as the Proton donor in the catalytic mechanism. His-291 provides a ligand contact to Ca(2+). Residue Gln-316 coordinates substrate.

Belongs to the glycosyl hydrolase 43 family. Homodimer.

It is found in the secreted. It carries out the reaction Hydrolysis of terminal non-reducing alpha-L-arabinofuranoside residues in alpha-L-arabinosides.. It participates in glycan metabolism; L-arabinan degradation. In terms of biological role, involved in the degradation of arabinan and is a key enzyme in the complete degradation of the plant cell wall. Catalyzes the cleavage of the terminal alpha-(1-&gt;5)-arabinofuranosyl bonds of linear arabinan and carboxymethylarabinan to produce almost exclusively arabinotriose. This Cellvibrio japonicus (strain Ueda107) (Pseudomonas fluorescens subsp. cellulosa) protein is Extracellular exo-alpha-(1-&gt;5)-L-arabinofuranosidase ArbA (arbA).